Here is a 312-residue protein sequence, read N- to C-terminus: Elongation factor Ts (312 aa).

An involved in Mg(2+) ion dislocation from EF-Tu region spans residues 80–83 (TDFV).

This sequence belongs to the EF-Ts family.

It localises to the cytoplasm. Its function is as follows. Associates with the EF-Tu.GDP complex and induces the exchange of GDP to GTP. It remains bound to the aminoacyl-tRNA.EF-Tu.GTP complex up to the GTP hydrolysis stage on the ribosome. This Maricaulis maris (strain MCS10) (Caulobacter maris) protein is Elongation factor Ts.